The following is a 210-amino-acid chain: Leucyl/phenylalanyl-tRNA--protein transferase (210 aa).

This sequence belongs to the L/F-transferase family.

The protein resides in the cytoplasm. It catalyses the reaction N-terminal L-lysyl-[protein] + L-leucyl-tRNA(Leu) = N-terminal L-leucyl-L-lysyl-[protein] + tRNA(Leu) + H(+). It carries out the reaction N-terminal L-arginyl-[protein] + L-leucyl-tRNA(Leu) = N-terminal L-leucyl-L-arginyl-[protein] + tRNA(Leu) + H(+). The enzyme catalyses L-phenylalanyl-tRNA(Phe) + an N-terminal L-alpha-aminoacyl-[protein] = an N-terminal L-phenylalanyl-L-alpha-aminoacyl-[protein] + tRNA(Phe). Functionally, functions in the N-end rule pathway of protein degradation where it conjugates Leu, Phe and, less efficiently, Met from aminoacyl-tRNAs to the N-termini of proteins containing an N-terminal arginine or lysine. This Ruegeria sp. (strain TM1040) (Silicibacter sp.) protein is Leucyl/phenylalanyl-tRNA--protein transferase.